The chain runs to 179 residues: Peptidyl-tRNA hydrolase (179 aa).

Tyr-14 serves as a coordination point for tRNA. The active-site Proton acceptor is the His-19. TRNA contacts are provided by Tyr-61, Asn-63, and Asn-107.

Belongs to the PTH family. As to quaternary structure, monomer.

Its subcellular location is the cytoplasm. It carries out the reaction an N-acyl-L-alpha-aminoacyl-tRNA + H2O = an N-acyl-L-amino acid + a tRNA + H(+). In terms of biological role, hydrolyzes ribosome-free peptidyl-tRNAs (with 1 or more amino acids incorporated), which drop off the ribosome during protein synthesis, or as a result of ribosome stalling. Functionally, catalyzes the release of premature peptidyl moieties from peptidyl-tRNA molecules trapped in stalled 50S ribosomal subunits, and thus maintains levels of free tRNAs and 50S ribosomes. This is Peptidyl-tRNA hydrolase from Campylobacter lari (strain RM2100 / D67 / ATCC BAA-1060).